The sequence spans 79 residues: Reactive oxygen species modulator 1 (79 aa).

A helical transmembrane segment spans residues 22–44 (GFVMGCAVGMAAGALFGPFSCLR). The segment at 42–60 (CLRIGMRGRELMGGIGKTM) is sufficient for antibacterial activity.

This sequence belongs to the MGR2 family.

The protein resides in the mitochondrion inner membrane. Its function is as follows. Has antibacterial activity against a variety of bacteria including S.aureus, P.aeruginosa and M.tuberculosis. Acts by inducing bacterial membrane breakage. Functionally, induces production of reactive oxygen species (ROS) which are necessary for cell proliferation. May play a role in inducing oxidative DNA damage and replicative senescence. May play a role in the coordination of mitochondrial morphology and cell proliferation. In Sus scrofa (Pig), this protein is Reactive oxygen species modulator 1 (ROMO1).